The primary structure comprises 485 residues: 2-succinylbenzoate--CoA ligase (485 aa).

It belongs to the ATP-dependent AMP-binding enzyme family. MenE subfamily.

The enzyme catalyses 2-succinylbenzoate + ATP + CoA = 2-succinylbenzoyl-CoA + AMP + diphosphate. Its pathway is quinol/quinone metabolism; 1,4-dihydroxy-2-naphthoate biosynthesis; 1,4-dihydroxy-2-naphthoate from chorismate: step 5/7. The protein operates within quinol/quinone metabolism; menaquinone biosynthesis. In terms of biological role, converts 2-succinylbenzoate (OSB) to 2-succinylbenzoyl-CoA (OSB-CoA). This is 2-succinylbenzoate--CoA ligase from Enterococcus faecalis (strain ATCC 700802 / V583).